We begin with the raw amino-acid sequence, 293 residues long: Ribosomal protein L11 methyltransferase (293 aa).

4 residues coordinate S-adenosyl-L-methionine: T145, G166, D188, and N230.

It belongs to the methyltransferase superfamily. PrmA family.

It is found in the cytoplasm. The catalysed reaction is L-lysyl-[protein] + 3 S-adenosyl-L-methionine = N(6),N(6),N(6)-trimethyl-L-lysyl-[protein] + 3 S-adenosyl-L-homocysteine + 3 H(+). Functionally, methylates ribosomal protein L11. The protein is Ribosomal protein L11 methyltransferase of Pasteurella multocida (strain Pm70).